A 392-amino-acid polypeptide reads, in one-letter code: MSEKDNNLTPWQQKHLEYQKRKAEEAKKEKKANQPKKVHFSSPFLKSLPKTEKNFDDTRDEAESAELLEEGFETNNEETQSSEAPIENEKIIAQLEQLSQENEYEYEEEQIKRPSRFSSLFKGSAPLLKKMWPALAVVVLVFVGSLYLISPLSKISTFSVSGNANESSEQVALASGIQTSDSIFNILNNKEKIEATIEQKFPRISAVTINYHFPNRFEAIVKEHTNSVYVKRNNQTYLVLNNGYVITTPVDATKLEKLPVLQNFNDEEVKTFVNAYETLKPAIKSLMTNVTKTPTDATKDFIAIDMSDGNQVRVSLSQLADRLPYYPSVAKQVQAPQVVDMEAGIYTKPKAAYDAYLSQLSTSKSASISAQNAKKTDASSENTAQSTTTSSN.

The interval Met1 to Asn88 is disordered. The Cytoplasmic segment spans residues Met1–Met131. Residues Lys14–Ala32 are compositionally biased toward basic and acidic residues. The segment covering Thr58 to Asn76 has biased composition (acidic residues). A helical transmembrane segment spans residues Trp132–Leu152. Positions Ser153 to His224 constitute a POTRA domain. At Ser153–Asn392 the chain is on the extracellular side. Residues Ile368–Asn392 are disordered.

This sequence belongs to the FtsQ/DivIB family. DivIB subfamily.

It is found in the cell membrane. Its function is as follows. Cell division protein that may be involved in stabilizing or promoting the assembly of the division complex. The protein is Cell division protein DivIB of Lactococcus lactis subsp. lactis (strain KF147).